The primary structure comprises 258 residues: Cell division protein ZapD (258 aa).

It belongs to the ZapD family. As to quaternary structure, interacts with FtsZ.

It is found in the cytoplasm. Cell division factor that enhances FtsZ-ring assembly. Directly interacts with FtsZ and promotes bundling of FtsZ protofilaments, with a reduction in FtsZ GTPase activity. This Coxiella burnetii (strain RSA 331 / Henzerling II) protein is Cell division protein ZapD.